A 495-amino-acid chain; its full sequence is Monoamine oxidase N (495 aa).

Polar residues predominate over residues 1–19; it reads MTSRDGYQWTPETGLTQGV. The interval 1–23 is disordered; the sequence is MTSRDGYQWTPETGLTQGVPSLG. Positions 493 to 495 match the Microbody targeting signal motif; the sequence is ARL.

Belongs to the flavin monoamine oxidase family. It depends on FAD as a cofactor.

The protein localises to the peroxisome. It carries out the reaction a secondary aliphatic amine + O2 + H2O = a primary amine + an aldehyde + H2O2. This is Monoamine oxidase N (maoN) from Aspergillus niger.